A 213-amino-acid polypeptide reads, in one-letter code: 3-isopropylmalate dehydratase small subunit (213 aa).

Belongs to the LeuD family. LeuD type 1 subfamily. Heterodimer of LeuC and LeuD.

It catalyses the reaction (2R,3S)-3-isopropylmalate = (2S)-2-isopropylmalate. It participates in amino-acid biosynthesis; L-leucine biosynthesis; L-leucine from 3-methyl-2-oxobutanoate: step 2/4. In terms of biological role, catalyzes the isomerization between 2-isopropylmalate and 3-isopropylmalate, via the formation of 2-isopropylmaleate. The protein is 3-isopropylmalate dehydratase small subunit of Pseudomonas syringae pv. syringae (strain B728a).